Here is a 314-residue protein sequence, read N- to C-terminus: Porphobilinogen deaminase (314 aa).

An S-(dipyrrolylmethanemethyl)cysteine modification is found at C249.

The protein belongs to the HMBS family. In terms of assembly, monomer. Dipyrromethane serves as cofactor.

The enzyme catalyses 4 porphobilinogen + H2O = hydroxymethylbilane + 4 NH4(+). It functions in the pathway porphyrin-containing compound metabolism; protoporphyrin-IX biosynthesis; coproporphyrinogen-III from 5-aminolevulinate: step 2/4. Functionally, tetrapolymerization of the monopyrrole PBG into the hydroxymethylbilane pre-uroporphyrinogen in several discrete steps. This is Porphobilinogen deaminase from Brucella anthropi (strain ATCC 49188 / DSM 6882 / CCUG 24695 / JCM 21032 / LMG 3331 / NBRC 15819 / NCTC 12168 / Alc 37) (Ochrobactrum anthropi).